A 542-amino-acid polypeptide reads, in one-letter code: MADRAPPPPPPPAGIDSRSGFCAATRIFHSTRAPGDLPPESLPMTAAAYAFSLLSSSTLPGRPALVDAATGIAISYPSFLAAVRSLAGGLWCSLGLRPGDVALVVAPSRLEVPVLDFALMSIGAVVSPANPVSTPEEYAHQVALSRPVVAFAAPEVAAKLPEHVRCVVIGSDEYGRLAASDGRRAAAPAAVAVKQSDTAAVLYSSGTTGRVKAVAITHRNLIALMSLHADNREKVAREAAEAGEEPPPPAVTLLPIPLFHVFGFMMVLRSVSMGETSVLMERFDFIAALRAIERYRVTLLPAAPPVLVAMVKYEEARRRDLSSLLVIGIGGAPLGREVAEQFASVFPNVELVQGYGLTESSGAVAATVGPEESKAYGSVGKLGSHLQAKIVDPSTGYVGDDEATAATVDSEGWLKTGDLCYFNEDGFLYIVDRLKELIKYKGYQVPPAELEHILQSHPGIADAAVIPYPDEEAGELPMAFIVRQPGSNITKEQVMDYVAKQVAPYKKVRRVAFVTAIPKSPAGKILRRELVQQALSMGASKL.

The ATP site is built by Ser204, Ser205, Gly206, Thr207, Thr208, and Lys212. Phe262 contributes to the (E)-4-coumaroyl-AMP binding site. Residue Arg282 participates in CoA binding. Residues 284–353 are SBD1; sequence DFIAALRAIE…SVFPNVELVQ (70 aa). The (E)-4-coumaroyl-AMP site is built by Gly331, Gln353, Gly354, and Thr358. Residues Gln353, Gly354, Thr358, Asp418, and Arg433 each contribute to the ATP site. The SBD2 stretch occupies residues 354 to 397; the sequence is GYGLTESSGAVAATVGPEESKAYGSVGKLGSHLQAKIVDPSTGY. Lys435 and Lys439 together coordinate (E)-4-coumaroyl-AMP. The CoA site is built by Lys441 and Gly442. An ATP-binding site is contributed by Lys524.

This sequence belongs to the ATP-dependent AMP-binding enzyme family. It depends on Mg(2+) as a cofactor.

It catalyses the reaction (E)-4-coumarate + ATP + CoA = (E)-4-coumaroyl-CoA + AMP + diphosphate. It carries out the reaction (E)-4-coumarate + ATP + H(+) = (E)-4-coumaroyl-AMP + diphosphate. The catalysed reaction is (E)-4-coumaroyl-AMP + CoA = (E)-4-coumaroyl-CoA + AMP + H(+). In terms of biological role, carboxylate--CoA ligase that may use 4-coumarate as substrate. Follows a two-step reaction mechanism, wherein the carboxylate substrate first undergoes adenylation by ATP, followed by a thioesterification in the presence of CoA to yield the final CoA thioester. The polypeptide is 4-coumarate--CoA ligase-like 5 (4CLL5) (Oryza sativa subsp. japonica (Rice)).